A 282-amino-acid chain; its full sequence is Pantothenate synthetase (282 aa).

Met-30–His-37 contacts ATP. His-37 acts as the Proton donor in catalysis. Residue Gln-61 coordinates (R)-pantoate. Gln-61 serves as a coordination point for beta-alanine. Gly-147–Asp-150 is a binding site for ATP. Gln-153 provides a ligand contact to (R)-pantoate. ATP is bound by residues Val-176 and Lys-184 to Arg-187.

The protein belongs to the pantothenate synthetase family. As to quaternary structure, homodimer.

Its subcellular location is the cytoplasm. It carries out the reaction (R)-pantoate + beta-alanine + ATP = (R)-pantothenate + AMP + diphosphate + H(+). It functions in the pathway cofactor biosynthesis; (R)-pantothenate biosynthesis; (R)-pantothenate from (R)-pantoate and beta-alanine: step 1/1. Catalyzes the condensation of pantoate with beta-alanine in an ATP-dependent reaction via a pantoyl-adenylate intermediate. The protein is Pantothenate synthetase of Bacillus cereus (strain B4264).